Here is a 192-residue protein sequence, read N- to C-terminus: MRAKPQSPLPRNPVPAWSPPTTTTDPMLEKDAAGGDFPANLVLQLMPLKTFPAAIRGVIQSELNYSVILQWVVTMDPEPVLSWTFSGVPCGMGEKLFIRRLSCEQLGTYMCIATNSKKQLVSEPVTISLPKPIMQPTEAEPMEPDPTLSLSGGSAIGLLAAGILGAGALIAGMCFIIIQSLRTDRQRIGICS.

A disordered region spans residues 1–26 (MRAKPQSPLPRNPVPAWSPPTTTTDP). Pro residues predominate over residues 7-18 (SPLPRNPVPAWS). Residues 20 to 128 (PTTTTDPMLE…QLVSEPVTIS (109 aa)) form the Ig-like domain. Asn64 is a glycosylation site (N-linked (GlcNAc...) asparagine). The helical transmembrane segment at 158–178 (LLAAGILGAGALIAGMCFIII) threads the bilayer.

As to expression, expressed in bone and small intestine. Highly expressed in osteoclasts, and low expressed in osteoblasts and peripheral blood mononuclear cells (PBMCs).

It is found in the cell membrane. Its function is as follows. May be involved in osteoclast differentiation. This chain is Immunoglobulin superfamily member 23, found in Homo sapiens (Human).